A 460-amino-acid chain; its full sequence is MFS-type transporter PUL3 (460 aa).

8 consecutive transmembrane segments (helical) span residues 16–36 (AVTLIAVQFSFDTCVYLSSVV), 50–70 (YLFILQAVSAAVQVFFSFIIG), 81–101 (WVIIFLYFLSFVGNFLYSCAG), 113–133 (IICGAASSSGAVVYSYITAIS), 151–171 (GICMALAQLVAILFALCDFTV), 181–201 (APTFASSFIILLICVLLMFVL), 240–260 (MFLSTFFMCEVLYFMPIFLTL), and 271–291 (VAFMVSAVLGVAGSFFAPDLV). A disordered region spans residues 300–323 (PSTQDETDTSDNDKIEKEESEQKS). The segment covering 310 to 323 (DNDKIEKEESEQKS) has biased composition (basic and acidic residues). 4 consecutive transmembrane segments (helical) span residues 333–353 (VSLTIFALFVALIGQAFMIGA), 369–389 (IFFTAGLSITMLGYNFMGSSV), 408–428 (FIGAIAGVGKLVAPIVLAALY), and 433–453 (GLPIGVGFGMILVGISIPSLV).

This sequence belongs to the major facilitator superfamily. TCR/Tet family.

The protein resides in the cell membrane. In terms of biological role, MFS-type transporer required for the uptake of iron via the uptake of the siderophore pulcherrimin-iron complex. This is MFS-type transporter PUL3 from Kluyveromyces lactis (strain ATCC 8585 / CBS 2359 / DSM 70799 / NBRC 1267 / NRRL Y-1140 / WM37) (Yeast).